Here is a 90-residue protein sequence, read N- to C-terminus: Probable Fe(2+)-trafficking protein (90 aa).

This sequence belongs to the Fe(2+)-trafficking protein family.

Functionally, could be a mediator in iron transactions between iron acquisition and iron-requiring processes, such as synthesis and/or repair of Fe-S clusters in biosynthetic enzymes. This Variovorax paradoxus (strain S110) protein is Probable Fe(2+)-trafficking protein.